Reading from the N-terminus, the 251-residue chain is Pyrroline-5-carboxylate reductase (251 aa).

The protein belongs to the pyrroline-5-carboxylate reductase family.

Its subcellular location is the cytoplasm. It catalyses the reaction L-proline + NADP(+) = (S)-1-pyrroline-5-carboxylate + NADPH + 2 H(+). The catalysed reaction is L-proline + NAD(+) = (S)-1-pyrroline-5-carboxylate + NADH + 2 H(+). Its pathway is amino-acid biosynthesis; L-proline biosynthesis; L-proline from L-glutamate 5-semialdehyde: step 1/1. Functionally, catalyzes the reduction of 1-pyrroline-5-carboxylate (PCA) to L-proline. This is Pyrroline-5-carboxylate reductase (proC) from Methanobrevibacter smithii.